The primary structure comprises 366 residues: Mannonate dehydratase (366 aa).

This sequence belongs to the mannonate dehydratase family. It depends on Fe(2+) as a cofactor. The cofactor is Mn(2+).

The catalysed reaction is D-mannonate = 2-dehydro-3-deoxy-D-gluconate + H2O. It functions in the pathway carbohydrate metabolism; pentose and glucuronate interconversion. Functionally, catalyzes the dehydration of D-mannonate. The polypeptide is Mannonate dehydratase (Streptococcus pneumoniae (strain 70585)).